The sequence spans 122 residues: Ribosome-binding factor A (122 aa).

Belongs to the RbfA family. Monomer. Binds 30S ribosomal subunits, but not 50S ribosomal subunits or 70S ribosomes.

It localises to the cytoplasm. One of several proteins that assist in the late maturation steps of the functional core of the 30S ribosomal subunit. Associates with free 30S ribosomal subunits (but not with 30S subunits that are part of 70S ribosomes or polysomes). Required for efficient processing of 16S rRNA. May interact with the 5'-terminal helix region of 16S rRNA. In Opitutus terrae (strain DSM 11246 / JCM 15787 / PB90-1), this protein is Ribosome-binding factor A.